Consider the following 477-residue polypeptide: Inner membrane protein YbhI (477 aa).

Over 1 to 5 (MNKKS) the chain is Cytoplasmic. The helical transmembrane segment at 6–26 (LWKLILILAIPCIIGFMPAPA) threads the bilayer. Position 27 (Gly27) is a topological domain, periplasmic. The helical transmembrane segment at 28 to 48 (LSELAWVLFGIYLAAIVGLVI) threads the bilayer. The Cytoplasmic portion of the chain corresponds to 49–50 (KP). A helical transmembrane segment spans residues 51–71 (FPEPVVLLIAVAASMVVVGNL). At 72-87 (SDGAFKTTAVLSGYSS) the chain is on the periplasmic side. The chain crosses the membrane as a helical span at residues 88–108 (GTTWLVFSAFTLSAAFVTTGL). The Cytoplasmic segment spans residues 109 to 148 (GKRIAYLLIGKIGNTTLGLGYVTVFLDLVLAPATPSNTAR). The helical transmembrane segment at 149 to 169 (AGGIVLPIINSVAVALGSEPE) threads the bilayer. The Periplasmic segment spans residues 170 to 219 (KSPRRVGHYLMMSIYMVTKTTSYMFFTAMAGNILALKMINDILHLQISWG). The helical transmembrane segment at 220 to 240 (GWALAAGLPGIIMLLVTPLVI) threads the bilayer. Over 241–272 (YTMYPPEIKKVDNKTIAKAGLAELGPMKIREK) the chain is Cytoplasmic. Residues 273-293 (MLLGVFVLALLGWIFSKSLGV) form a helical membrane-spanning segment. The Periplasmic portion of the chain corresponds to 294–297 (DEST). Residues 298-318 (VAIVVMATMLLLGIVTWEDVV) traverse the membrane as a helical segment. At 319 to 356 (KNKGGWNTLIWYGGIIGLSSLLSKVKFFEWLAEVFKNN) the chain is on the cytoplasmic side. Residues 357-377 (LAFDGHGNVAFFVIIFLSIIV) form a helical membrane-spanning segment. Residue Arg378 is a topological domain, periplasmic. The chain crosses the membrane as a helical span at residues 379 to 399 (YFFASGSAYIVAMLPVFAMLA). The Cytoplasmic portion of the chain corresponds to 400 to 445 (NVSGAPLMLTALALLFSNSYGGMVTHYGGAAGPVIFGVGYNDIKSW). A helical transmembrane segment spans residues 446–466 (WLVGAVLTILTFLVHITLGVW). The Periplasmic segment spans residues 467–477 (WWNMLIGWNML).

This sequence belongs to the SLC13A/DASS transporter (TC 2.A.47) family. DIT1 subfamily.

The protein resides in the cell inner membrane. In Escherichia coli (strain K12), this protein is Inner membrane protein YbhI (ybhI).